The chain runs to 203 residues: Glycerol-3-phosphate acyltransferase (203 aa).

5 helical membrane-spanning segments follow: residues 10–30 (MLIL…GLIL), 59–79 (GAAA…VLLA), 87–107 (AAQV…WLGF), 116–136 (FLGL…LSWL), and 160–180 (LVLL…LMVF).

Belongs to the PlsY family. In terms of assembly, probably interacts with PlsX.

The protein resides in the cell inner membrane. The catalysed reaction is an acyl phosphate + sn-glycerol 3-phosphate = a 1-acyl-sn-glycero-3-phosphate + phosphate. Its pathway is lipid metabolism; phospholipid metabolism. Functionally, catalyzes the transfer of an acyl group from acyl-phosphate (acyl-PO(4)) to glycerol-3-phosphate (G3P) to form lysophosphatidic acid (LPA). This enzyme utilizes acyl-phosphate as fatty acyl donor, but not acyl-CoA or acyl-ACP. The sequence is that of Glycerol-3-phosphate acyltransferase from Ruegeria pomeroyi (strain ATCC 700808 / DSM 15171 / DSS-3) (Silicibacter pomeroyi).